The chain runs to 354 residues: tRNA N6-adenosine threonylcarbamoyltransferase (354 aa).

Fe cation is bound by residues histidine 116 and histidine 120. Residues 139–143 (LVSGG), aspartate 172, glycine 185, and asparagine 281 contribute to the substrate site. Aspartate 309 contacts Fe cation.

It belongs to the KAE1 / TsaD family. The cofactor is Fe(2+).

Its subcellular location is the cytoplasm. The catalysed reaction is L-threonylcarbamoyladenylate + adenosine(37) in tRNA = N(6)-L-threonylcarbamoyladenosine(37) in tRNA + AMP + H(+). Functionally, required for the formation of a threonylcarbamoyl group on adenosine at position 37 (t(6)A37) in tRNAs that read codons beginning with adenine. Is involved in the transfer of the threonylcarbamoyl moiety of threonylcarbamoyl-AMP (TC-AMP) to the N6 group of A37, together with TsaE and TsaB. TsaD likely plays a direct catalytic role in this reaction. In Parasynechococcus marenigrum (strain WH8102), this protein is tRNA N6-adenosine threonylcarbamoyltransferase.